We begin with the raw amino-acid sequence, 225 residues long: Cell wall mannoprotein CIS3 (225 aa).

An N-terminal signal peptide occupies residues 1–21; that stretch reads MQFKNVALAASVAALSATASA. Residues 22–64 constitute a propeptide that is removed on maturation; that stretch reads EGYTPGEPWSTLTPTGSISCGAAEYTTTFGIAVQAITSSKAKR. A PIR1/2/3 repeat occupies 65–82; sequence DVISQIGDGQVQATSAAA. S68 is a glycosylation site (O-linked (Man) serine). T78 carries O-linked (Man) threonine glycosylation. A compositionally biased stretch (polar residues) spans 78–92; that stretch reads TSAAATDSQVQASST. The interval 78 to 128 is disordered; it reads TSAAATDSQVQASSTATPTSSEKISSSASKTSSTNATSSSCATPSLKDSSC. The span at 93-122 shows a compositional bias: low complexity; sequence ATPTSSEKISSSASKTSSTNATSSSCATPS. O-linked (Man) serine glycans are attached at residues S102, S103, S104, and S106. T108 is a glycosylation site (O-linked (Man) threonine). O-linked (Man) serine glycosylation occurs at S109. Residues T111 and T114 are each glycosylated (O-linked (Man) threonine). O-linked (Man) serine glycans are attached at residues S115 and S116.

Belongs to the PIR protein family. In terms of processing, covalently linked to beta-1,3-glucan of the inner cell wall layer via an alkali-sensitive ester linkage between the gamma-carboxyl group of glutamic acid, arising from Gln-74 within the PIR1/2/3 repeat, and hydroxyl groups of glucoses of beta-1,3-glucan chains. Extensively O-mannosylated.

The protein localises to the secreted. Its subcellular location is the cell wall. Functionally, component of the outer cell wall layer. Required for stability of the cell wall and for optimal growth. Required for resistance against several antifungal and cell wall-perturbing agents. This is Cell wall mannoprotein CIS3 (CIS3) from Saccharomyces cerevisiae (strain AWRI1631) (Baker's yeast).